Consider the following 311-residue polypeptide: Uridine phosphorylase 1 (311 aa).

Residues Gly-61, Arg-95, and 139 to 142 (RIGT) each bind phosphate. Residues 143 to 144 (SG) and 218 to 220 (QGR) each bind uridine.

Belongs to the PNP/UDP phosphorylase family. Homodimer. The N-terminus is blocked.

It carries out the reaction uridine + phosphate = alpha-D-ribose 1-phosphate + uracil. The catalysed reaction is 2'-deoxyuridine + phosphate = 2-deoxy-alpha-D-ribose 1-phosphate + uracil. It functions in the pathway pyrimidine metabolism; UMP biosynthesis via salvage pathway; uracil from uridine (phosphorylase route): step 1/1. Strongly inhibited by 2,2'-anhydro-5-ethyluridine, a competitive inhibitor. Functionally, catalyzes the reversible phosphorylytic cleavage of uridine to uracil and ribose-1-phosphate which can then be utilized as carbon and energy sources or in the rescue of pyrimidine bases for nucleotide synthesis. Shows broad substrate specificity and can also accept deoxyuridine and other analogous compounds. This chain is Uridine phosphorylase 1, found in Mus musculus (Mouse).